The primary structure comprises 136 residues: Ribonuclease P protein component (136 aa).

Belongs to the RnpA family. Consists of a catalytic RNA component (M1 or rnpB) and a protein subunit.

The catalysed reaction is Endonucleolytic cleavage of RNA, removing 5'-extranucleotides from tRNA precursor.. Functionally, RNaseP catalyzes the removal of the 5'-leader sequence from pre-tRNA to produce the mature 5'-terminus. It can also cleave other RNA substrates such as 4.5S RNA. The protein component plays an auxiliary but essential role in vivo by binding to the 5'-leader sequence and broadening the substrate specificity of the ribozyme. This chain is Ribonuclease P protein component, found in Arthrobacter sp. (strain FB24).